The primary structure comprises 203 residues: Thymidylate kinase (203 aa).

10 to 17 is a binding site for ATP; it reads GIDGAGKS.

This sequence belongs to the thymidylate kinase family.

The enzyme catalyses dTMP + ATP = dTDP + ADP. In terms of biological role, phosphorylation of dTMP to form dTDP in both de novo and salvage pathways of dTTP synthesis. The sequence is that of Thymidylate kinase from Cupriavidus taiwanensis (strain DSM 17343 / BCRC 17206 / CCUG 44338 / CIP 107171 / LMG 19424 / R1) (Ralstonia taiwanensis (strain LMG 19424)).